The primary structure comprises 134 residues: TSC22 domain family protein 3 (134 aa).

Methionine 1 bears the N-acetylmethionine mark. Residues 1–60 (MNTEMYQTPMEVAVYQLHNFSISFFSSLLGGDVVSVKLDNSASGASVVAIDNKIEQAMDL) form an AP1-binding region. A phosphoserine mark is found at alanine 42 and valine 73. The leucine-zipper stretch occupies residues 76-97 (LKEQIRELVEKNSQLERENTLL). Phosphoserine is present on serine 102. A disordered region spans residues 108–134 (KFQSCLSPEEPAPESPQVPEAPGGSAV).

It belongs to the TSC-22/Dip/Bun family. As to quaternary structure, can form homodimers, however it is likely to function as a monomer. Interacts with NFKB1. Interacts (via N-terminus) with JUN and FOS; these interactions inhibit the binding of active AP1 to its target DNA. In terms of assembly, interacts with MYOD1. Interacts with HDAC1; this interaction affects HDAC1 activity on MYOG promoter and thus inhibits MYOD1 transcriptional activity. In terms of tissue distribution, ubiquitously expressed, including in the fetal brain and liver. Expressed in brain, lung, spleen and skeletal muscle. Lower levels detected in heart and kidney. Not detected in the pancreas. In non-lymphoid tissues, in the absence of inflammation, the major source of constitutive expression is the macrophage lineage. Also expressed in cells from different hemopoietic cell lineages, including bone marrow cells, CD34+ stem cells, mature B- and T-cells, monocytes and granulocytes. Down-regulated in activated macrophages from inflammatory lesions of delayed-type hypersensitivity (DTH) reactions, such as in tuberculosis and in Crohn disease, whereas in Burkitt lymphoma, persists in macrophages involved in the phagocytosis of apoptotic malignant cells.

The protein resides in the cytoplasm. Its subcellular location is the nucleus. In terms of biological role, protects T-cells from IL2 deprivation-induced apoptosis through the inhibition of FOXO3A transcriptional activity that leads to the down-regulation of the pro-apoptotic factor BCL2L11. In macrophages, plays a role in the anti-inflammatory and immunosuppressive effects of glucocorticoids and IL10. In T-cells, inhibits anti-CD3-induced NFKB1 nuclear translocation and thereby NFKB1 DNA-binding activities. In vitro, suppresses AP-1 transcription factor complex DNA-binding activities. Functionally, inhibits myogenic differentiation and mediates anti-myogenic effects of glucocorticoids by binding and regulating MYOD1 and HDAC1 transcriptional activity resulting in reduced expression of MYOG. This is TSC22 domain family protein 3 from Homo sapiens (Human).